Reading from the N-terminus, the 356-residue chain is Protein RecA (356 aa).

Position 67–74 (67–74 (GPESSGKT)) interacts with ATP.

It belongs to the RecA family.

It is found in the cytoplasm. Its function is as follows. Can catalyze the hydrolysis of ATP in the presence of single-stranded DNA, the ATP-dependent uptake of single-stranded DNA by duplex DNA, and the ATP-dependent hybridization of homologous single-stranded DNAs. It interacts with LexA causing its activation and leading to its autocatalytic cleavage. The chain is Protein RecA from Yersinia pseudotuberculosis serotype I (strain IP32953).